The sequence spans 70 residues: Large ribosomal subunit protein bL31 (70 aa).

The Zn(2+) site is built by C16, C18, C36, and C39.

The protein belongs to the bacterial ribosomal protein bL31 family. Type A subfamily. As to quaternary structure, part of the 50S ribosomal subunit. The cofactor is Zn(2+).

Binds the 23S rRNA. The sequence is that of Large ribosomal subunit protein bL31 from Tolumonas auensis (strain DSM 9187 / NBRC 110442 / TA 4).